Here is a 98-residue protein sequence, read N- to C-terminus: High mobility group nucleosome-binding domain-containing protein 3 (98 aa).

Basic and acidic residues-rich tracts occupy residues 1–25, 39–52, 61–71, and 80–98; these read MPKRKSPEGAEGKDAAKVTKQEPTR, PEPKPRKTTKKEPG, GKKDEKQEAAK, and GENKAEEAQKTESVGDKNE. The segment at 1 to 98 is disordered; it reads MPKRKSPEGA…KTESVGDKNE (98 aa).

This sequence belongs to the HMGN family.

It is found in the nucleus. This Gallus gallus (Chicken) protein is High mobility group nucleosome-binding domain-containing protein 3 (HMGN3).